Here is a 569-residue protein sequence, read N- to C-terminus: Proline--tRNA ligase (569 aa).

It belongs to the class-II aminoacyl-tRNA synthetase family. ProS type 1 subfamily. Homodimer.

The protein resides in the cytoplasm. It catalyses the reaction tRNA(Pro) + L-proline + ATP = L-prolyl-tRNA(Pro) + AMP + diphosphate. Catalyzes the attachment of proline to tRNA(Pro) in a two-step reaction: proline is first activated by ATP to form Pro-AMP and then transferred to the acceptor end of tRNA(Pro). As ProRS can inadvertently accommodate and process non-cognate amino acids such as alanine and cysteine, to avoid such errors it has two additional distinct editing activities against alanine. One activity is designated as 'pretransfer' editing and involves the tRNA(Pro)-independent hydrolysis of activated Ala-AMP. The other activity is designated 'posttransfer' editing and involves deacylation of mischarged Ala-tRNA(Pro). The misacylated Cys-tRNA(Pro) is not edited by ProRS. The polypeptide is Proline--tRNA ligase (Campylobacter hominis (strain ATCC BAA-381 / DSM 21671 / CCUG 45161 / LMG 19568 / NCTC 13146 / CH001A)).